Consider the following 315-residue polypeptide: Homoserine kinase (315 aa).

97–107 (PPARGLGSSAT) serves as a coordination point for ATP.

This sequence belongs to the GHMP kinase family. Homoserine kinase subfamily.

The protein localises to the cytoplasm. It carries out the reaction L-homoserine + ATP = O-phospho-L-homoserine + ADP + H(+). Its pathway is amino-acid biosynthesis; L-threonine biosynthesis; L-threonine from L-aspartate: step 4/5. Functionally, catalyzes the ATP-dependent phosphorylation of L-homoserine to L-homoserine phosphate. The polypeptide is Homoserine kinase (Prochlorococcus marinus subsp. pastoris (strain CCMP1986 / NIES-2087 / MED4)).